Reading from the N-terminus, the 39-residue chain is SGSKTATKGDGCFGVRIDRIGSTSGMGCGGVPKPTPGGS.

A propeptide spanning residues 1 to 8 (SGSKTATK) is cleaved from the precursor. Cys12 and Cys28 are disulfide-bonded. The interval 20–39 (IGSTSGMGCGGVPKPTPGGS) is disordered.

It belongs to the natriuretic peptide family. In terms of tissue distribution, expressed by the venom gland.

The protein resides in the secreted. In terms of biological role, snake venom natriuretic peptide that targets both NPR1 and NPR2. Exhibits hypotensive and vasodepressor activities. This chain is Natriuretic peptide CnNP-b, found in Cryptophis nigrescens (Eastern small-eyed snake).